A 433-amino-acid polypeptide reads, in one-letter code: Serine hydroxymethyltransferase (433 aa).

(6S)-5,6,7,8-tetrahydrofolate is bound by residues L121 and 125 to 127; that span reads GHI. K231 bears the N6-(pyridoxal phosphate)lysine mark.

This sequence belongs to the SHMT family. As to quaternary structure, homodimer. The cofactor is pyridoxal 5'-phosphate.

The protein resides in the cytoplasm. It functions in the pathway amino-acid biosynthesis; glycine biosynthesis; glycine from L-serine: step 1/1. Catalyzes the reversible interconversion of serine and glycine with a modified folate serving as the one-carbon carrier. Also exhibits a pteridine-independent aldolase activity toward beta-hydroxyamino acids, producing glycine and aldehydes, via a retro-aldol mechanism. The chain is Serine hydroxymethyltransferase from Picrophilus torridus (strain ATCC 700027 / DSM 9790 / JCM 10055 / NBRC 100828 / KAW 2/3).